The following is a 459-amino-acid chain: tRNA modification GTPase MnmE (459 aa).

Positions 22, 85, and 124 each coordinate (6S)-5-formyl-5,6,7,8-tetrahydrofolate. The TrmE-type G domain occupies 221 to 380 (GLSTVIVGKP…LEIQIRDLFF (160 aa)). Asn231 lines the K(+) pocket. Residues 231 to 236 (NVGKSS), 250 to 256 (TEVAGTT), and 275 to 278 (DTAG) each bind GTP. Ser235 serves as a coordination point for Mg(2+). Thr250, Val252, and Thr255 together coordinate K(+). Thr256 provides a ligand contact to Mg(2+). Residue Lys459 participates in (6S)-5-formyl-5,6,7,8-tetrahydrofolate binding.

Belongs to the TRAFAC class TrmE-Era-EngA-EngB-Septin-like GTPase superfamily. TrmE GTPase family. Homodimer. Heterotetramer of two MnmE and two MnmG subunits. It depends on K(+) as a cofactor.

Its subcellular location is the cytoplasm. Functionally, exhibits a very high intrinsic GTPase hydrolysis rate. Involved in the addition of a carboxymethylaminomethyl (cmnm) group at the wobble position (U34) of certain tRNAs, forming tRNA-cmnm(5)s(2)U34. This chain is tRNA modification GTPase MnmE, found in Staphylococcus aureus (strain MSSA476).